The chain runs to 638 residues: Acetolactate synthase 1, chloroplastic (638 aa).

Residues 1–19 show a composition bias toward low complexity; it reads MATAAAASTALTGATTAAP. Residues 1–23 form a disordered region; that stretch reads MATAAAASTALTGATTAAPKARR. A chloroplast-targeting transit peptide spans 1–39; that stretch reads MATAAAASTALTGATTAAPKARRRAHLLATRRALAAPIR. Residue Glu-112 participates in thiamine diphosphate binding. A disulfide bridge links Cys-132 with Cys-278. Residues Arg-214, 320 to 341, and 363 to 382 each bind FAD; these read HGTV…LGVR and DIDP…ICAD. Positions 455–535 are thiamine pyrophosphate binding; sequence QHQMWAAQYY…VKVFVLNNQH (81 aa). Residues Asp-506 and Asn-533 each coordinate Mg(2+).

Belongs to the TPP enzyme family. The cofactor is Mg(2+). Requires thiamine diphosphate as cofactor.

It localises to the plastid. Its subcellular location is the chloroplast. It carries out the reaction 2 pyruvate + H(+) = (2S)-2-acetolactate + CO2. The protein operates within amino-acid biosynthesis; L-isoleucine biosynthesis; L-isoleucine from 2-oxobutanoate: step 1/4. Its pathway is amino-acid biosynthesis; L-valine biosynthesis; L-valine from pyruvate: step 1/4. The protein is Acetolactate synthase 1, chloroplastic (ALS1) of Zea mays (Maize).